The following is a 369-amino-acid chain: MPERDPILLTPGPLTTSRMTRDAMLHDWGSWDAAFNRLTKSVCADLVRIAGGGDAYVCVPLQGSGTFAVEAALGTLVPRDGRVLVPNNGAYCARIAKILRRLGIAHSELPFAEDEPASAQAIDAALARDARITHVALVHLETSAGLLNPLDDIAAVCRARGKALIVDAMSSFGALPIALAGSGIDALISASGKCLEGVPGMGFVIARRAPLEAAEGRSPSVVLDLHDQYAYMQRTSQWRFTPPTHVLAALRAALDQFFDEGGQPARGARYAENCAALVDGMRALGFEPFLDARAQASVIVTFHAPADPAYAFAAFYAAVRDAGYVLYPGKLTTADTFRVGCIGALGAHEMRGAVAAIGGALRALGIAMR.

N6-(pyridoxal phosphate)lysine is present on lysine 193.

It belongs to the class-V pyridoxal-phosphate-dependent aminotransferase family. PhnW subfamily. As to quaternary structure, homodimer. Requires pyridoxal 5'-phosphate as cofactor.

It carries out the reaction (2-aminoethyl)phosphonate + pyruvate = phosphonoacetaldehyde + L-alanine. Involved in phosphonate degradation. This Burkholderia thailandensis (strain ATCC 700388 / DSM 13276 / CCUG 48851 / CIP 106301 / E264) protein is 2-aminoethylphosphonate--pyruvate transaminase.